The primary structure comprises 92 residues: Small ribosomal subunit protein uS19c (92 aa).

The protein belongs to the universal ribosomal protein uS19 family.

Its subcellular location is the plastid. It is found in the chloroplast. In terms of biological role, protein S19 forms a complex with S13 that binds strongly to the 16S ribosomal RNA. This is Small ribosomal subunit protein uS19c from Nasturtium officinale (Watercress).